Reading from the N-terminus, the 606-residue chain is Elongation factor 4 (606 aa).

In terms of domain architecture, tr-type G spans 11–193 (DKIRNFSIVA…AIVTRLPPPK (183 aa)). GTP is bound by residues 23 to 28 (DHGKST) and 140 to 143 (NKVD).

This sequence belongs to the TRAFAC class translation factor GTPase superfamily. Classic translation factor GTPase family. LepA subfamily.

It is found in the cell inner membrane. The catalysed reaction is GTP + H2O = GDP + phosphate + H(+). In terms of biological role, required for accurate and efficient protein synthesis under certain stress conditions. May act as a fidelity factor of the translation reaction, by catalyzing a one-codon backward translocation of tRNAs on improperly translocated ribosomes. Back-translocation proceeds from a post-translocation (POST) complex to a pre-translocation (PRE) complex, thus giving elongation factor G a second chance to translocate the tRNAs correctly. Binds to ribosomes in a GTP-dependent manner. The sequence is that of Elongation factor 4 from Caulobacter vibrioides (strain ATCC 19089 / CIP 103742 / CB 15) (Caulobacter crescentus).